Consider the following 932-residue polypeptide: 2-oxoglutarate dehydrogenase E1 component (932 aa).

This sequence belongs to the alpha-ketoglutarate dehydrogenase family. Homodimer. Part of the 2-oxoglutarate dehydrogenase (OGDH) complex composed of E1 (2-oxoglutarate dehydrogenase), E2 (dihydrolipoamide succinyltransferase) and E3 (dihydrolipoamide dehydrogenase); the complex contains multiple copies of the three enzymatic components (E1, E2 and E3). Thiamine diphosphate serves as cofactor.

It catalyses the reaction N(6)-[(R)-lipoyl]-L-lysyl-[protein] + 2-oxoglutarate + H(+) = N(6)-[(R)-S(8)-succinyldihydrolipoyl]-L-lysyl-[protein] + CO2. Functionally, E1 component of the 2-oxoglutarate dehydrogenase (OGDH) complex which catalyzes the decarboxylation of 2-oxoglutarate, the first step in the conversion of 2-oxoglutarate to succinyl-CoA and CO(2). The polypeptide is 2-oxoglutarate dehydrogenase E1 component (Staphylococcus aureus (strain USA300)).